The chain runs to 157 residues: ATP synthase subunit b (157 aa).

The helical transmembrane segment at 7–27 threads the bilayer; that stretch reads LIAQLVVFFILAWVTMKFVWP.

The protein belongs to the ATPase B chain family. As to quaternary structure, F-type ATPases have 2 components, F(1) - the catalytic core - and F(0) - the membrane proton channel. F(1) has five subunits: alpha(3), beta(3), gamma(1), delta(1), epsilon(1). F(0) has three main subunits: a(1), b(2) and c(10-14). The alpha and beta chains form an alternating ring which encloses part of the gamma chain. F(1) is attached to F(0) by a central stalk formed by the gamma and epsilon chains, while a peripheral stalk is formed by the delta and b chains.

Its subcellular location is the cell inner membrane. Its function is as follows. F(1)F(0) ATP synthase produces ATP from ADP in the presence of a proton or sodium gradient. F-type ATPases consist of two structural domains, F(1) containing the extramembraneous catalytic core and F(0) containing the membrane proton channel, linked together by a central stalk and a peripheral stalk. During catalysis, ATP synthesis in the catalytic domain of F(1) is coupled via a rotary mechanism of the central stalk subunits to proton translocation. Component of the F(0) channel, it forms part of the peripheral stalk, linking F(1) to F(0). This chain is ATP synthase subunit b, found in Aromatoleum aromaticum (strain DSM 19018 / LMG 30748 / EbN1) (Azoarcus sp. (strain EbN1)).